Consider the following 191-residue polypeptide: Ion-translocating oxidoreductase complex subunit B (191 aa).

The hydrophobic stretch occupies residues 1-26; that stretch reads MSLVLVAVLALLGLCLIAGAILGFAA. Residues 32-90 enclose the 4Fe-4S domain; that stretch reads EGDPIAEQINALLPQTQCGQCGYPGCKPYAEAIAGGDKINKCPPGGEATIQALADLLDV. Residues C49, C52, C57, C73, C114, C117, C120, C124, C144, C147, C150, and C154 each contribute to the [4Fe-4S] cluster site. 4Fe-4S ferredoxin-type domains lie at 105–134 and 135–164; these read MVAF…GAAR and QMHT…MIEV.

This sequence belongs to the 4Fe4S bacterial-type ferredoxin family. RnfB subfamily. As to quaternary structure, the complex is composed of six subunits: RnfA, RnfB, RnfC, RnfD, RnfE and RnfG. Requires [4Fe-4S] cluster as cofactor.

The protein resides in the cell inner membrane. In terms of biological role, part of a membrane-bound complex that couples electron transfer with translocation of ions across the membrane. This Ectopseudomonas mendocina (strain ymp) (Pseudomonas mendocina) protein is Ion-translocating oxidoreductase complex subunit B.